Consider the following 754-residue polypeptide: 5-methyltetrahydropteroyltriglutamate--homocysteine methyltransferase (754 aa).

5-methyltetrahydropteroyltri-L-glutamate-binding positions include 17–20 and K117; that span reads RELK. Residues 431 to 433 and E484 each bind L-homocysteine; that span reads IGS. L-methionine is bound by residues 431–433 and E484; that span reads IGS. 5-methyltetrahydropteroyltri-L-glutamate contacts are provided by residues 515–516 and W561; that span reads RC. D599 provides a ligand contact to L-homocysteine. Position 599 (D599) interacts with L-methionine. A 5-methyltetrahydropteroyltri-L-glutamate-binding site is contributed by E605. Positions 641, 643, and 665 each coordinate Zn(2+). H694 serves as the catalytic Proton donor. A Zn(2+)-binding site is contributed by C726.

It belongs to the vitamin-B12 independent methionine synthase family. Zn(2+) is required as a cofactor.

The enzyme catalyses 5-methyltetrahydropteroyltri-L-glutamate + L-homocysteine = tetrahydropteroyltri-L-glutamate + L-methionine. The protein operates within amino-acid biosynthesis; L-methionine biosynthesis via de novo pathway; L-methionine from L-homocysteine (MetE route): step 1/1. In terms of biological role, catalyzes the transfer of a methyl group from 5-methyltetrahydrofolate to homocysteine resulting in methionine formation. The sequence is that of 5-methyltetrahydropteroyltriglutamate--homocysteine methyltransferase from Salmonella choleraesuis (strain SC-B67).